Reading from the N-terminus, the 339-residue chain is Phenylalanine--tRNA ligase alpha subunit (339 aa).

Residue glutamate 254 coordinates Mg(2+).

Belongs to the class-II aminoacyl-tRNA synthetase family. Phe-tRNA synthetase alpha subunit type 1 subfamily. Tetramer of two alpha and two beta subunits. Mg(2+) is required as a cofactor.

The protein resides in the cytoplasm. The catalysed reaction is tRNA(Phe) + L-phenylalanine + ATP = L-phenylalanyl-tRNA(Phe) + AMP + diphosphate + H(+). This is Phenylalanine--tRNA ligase alpha subunit from Clostridium botulinum (strain Alaska E43 / Type E3).